A 225-amino-acid polypeptide reads, in one-letter code: PKHD-type hydroxylase YbiX (225 aa).

In terms of domain architecture, Fe2OG dioxygenase spans 78–177 (TLSTPLFNRY…RVASFMWIQS (100 aa)). Residues histidine 96, aspartate 98, and histidine 158 each contribute to the Fe cation site. 2-oxoglutarate is bound at residue arginine 168.

Fe(2+) is required as a cofactor. The cofactor is L-ascorbate.

The polypeptide is PKHD-type hydroxylase YbiX (Escherichia coli O81 (strain ED1a)).